A 127-amino-acid chain; its full sequence is MHQDDYYPQPSLLVNGSLDQEPQRQLPDMPPRGGDGLPLLAAIIAAFVLLAICIVLAVHFGPALHQGQATLLTEPPALKPENGVYLIHWRLLSLQDSHRESQQGLFIPHSGPALDGHRPSIDEVTYL.

An N-linked (GlcNAc...) asparagine glycan is attached at Asn15. The helical transmembrane segment at 38–58 threads the bilayer; the sequence is PLLAAIIAAFVLLAICIVLAV.

Its subcellular location is the membrane. This is Small integral membrane protein 33 from Mus musculus (Mouse).